A 189-amino-acid chain; its full sequence is Large ribosomal subunit protein bL9 (189 aa).

Belongs to the bacterial ribosomal protein bL9 family.

In terms of biological role, binds to the 23S rRNA. This chain is Large ribosomal subunit protein bL9, found in Methylocella silvestris (strain DSM 15510 / CIP 108128 / LMG 27833 / NCIMB 13906 / BL2).